The primary structure comprises 122 residues: Large ribosomal subunit protein uL14 (122 aa).

It belongs to the universal ribosomal protein uL14 family. Part of the 50S ribosomal subunit. Forms a cluster with proteins L3 and L19. In the 70S ribosome, L14 and L19 interact and together make contacts with the 16S rRNA in bridges B5 and B8.

Functionally, binds to 23S rRNA. Forms part of two intersubunit bridges in the 70S ribosome. This is Large ribosomal subunit protein uL14 from Sinorhizobium fredii (strain NBRC 101917 / NGR234).